Here is a 506-residue protein sequence, read N- to C-terminus: ATP synthase subunit alpha, chloroplastic (506 aa).

170–177 is an ATP binding site; the sequence is GDRQTGKT.

Belongs to the ATPase alpha/beta chains family. In terms of assembly, F-type ATPases have 2 components, CF(1) - the catalytic core - and CF(0) - the membrane proton channel. CF(1) has five subunits: alpha(3), beta(3), gamma(1), delta(1), epsilon(1). CF(0) has four main subunits: a, b, b' and c.

The protein localises to the plastid. It localises to the chloroplast thylakoid membrane. It catalyses the reaction ATP + H2O + 4 H(+)(in) = ADP + phosphate + 5 H(+)(out). In terms of biological role, produces ATP from ADP in the presence of a proton gradient across the membrane. The alpha chain is a regulatory subunit. The polypeptide is ATP synthase subunit alpha, chloroplastic (Chlorella vulgaris (Green alga)).